We begin with the raw amino-acid sequence, 309 residues long: Taste receptor type 2 member 114 (309 aa).

At 1 to 7 (MLGAMEG) the chain is on the extracellular side. A helical membrane pass occupies residues 8–28 (VLLSVATSEALLGIVGNTFIA). Residues 29 to 43 (LVNCMDCTRNKNLYN) lie on the Cytoplasmic side of the membrane. The chain crosses the membrane as a helical span at residues 44 to 64 (IGFILTGLAISRICLVWILIT). Residues 65-87 (EAYIKIFSPQLLSPINIIELISY) are Extracellular-facing. The helical transmembrane segment at 88-108 (LWIITSQLNVWFATSLSIFYF) threads the bilayer. Topologically, residues 109–127 (LKIANFSHHIFLWLKRRIN) are cytoplasmic. Residues 128–148 (IVFAFLIGCLLMSWLFSFPVV) traverse the membrane as a helical segment. At 149-182 (VKMVKDKKMLYINSSWQIHMKKSELIINYVFTNG) the chain is on the extracellular side. An N-linked (GlcNAc...) asparagine glycan is attached at Asn-161. The helical transmembrane segment at 183–203 (GVFLLFIIMLIVCFLLIISLW) threads the bilayer. The Cytoplasmic segment spans residues 204–233 (RHSKWMQSNESGFRDLNTEVHVKTIKVLLS). Residues 234–254 (FIILFILHLIGITINVICLLV) form a helical membrane-spanning segment. The Extracellular segment spans residues 255–259 (PENNL). A helical transmembrane segment spans residues 260–280 (LFVFGLTIAFLYPCCHSLILI). The Cytoplasmic segment spans residues 281–309 (LANSRLKRCFVRILQQLMCSEEGKEFRNT).

Belongs to the G-protein coupled receptor T2R family.

It localises to the membrane. Putative taste receptor which may play a role in the perception of bitterness. The polypeptide is Taste receptor type 2 member 114 (Rattus norvegicus (Rat)).